We begin with the raw amino-acid sequence, 188 residues long: Ribosome maturation factor RimM (188 aa).

In terms of domain architecture, PRC barrel spans 112-187 (SDSYYWVDLI…LLTLDWQSDW (76 aa)).

Belongs to the RimM family. As to quaternary structure, binds ribosomal protein uS19.

It localises to the cytoplasm. Its function is as follows. An accessory protein needed during the final step in the assembly of 30S ribosomal subunit, possibly for assembly of the head region. Essential for efficient processing of 16S rRNA. May be needed both before and after RbfA during the maturation of 16S rRNA. It has affinity for free ribosomal 30S subunits but not for 70S ribosomes. This Polynucleobacter asymbioticus (strain DSM 18221 / CIP 109841 / QLW-P1DMWA-1) (Polynucleobacter necessarius subsp. asymbioticus) protein is Ribosome maturation factor RimM.